Reading from the N-terminus, the 120-residue chain is SPbeta prophage-derived uncharacterized protein YosG (120 aa).

The polypeptide is SPbeta prophage-derived uncharacterized protein YosG (yosG) (Bacillus subtilis (strain 168)).